The primary structure comprises 449 residues: Rubisco accumulation factor 1.2, chloroplastic (449 aa).

A chloroplast-targeting transit peptide spans 1-61 (MFSLKSLISS…NMIPKNPPAR (61 aa)). Residues 75-264 (IPTQFRSLDS…KAKNRLNTEL (190 aa)) are N-terminal alpha-helix. Residues 262–288 (TELYGDKEAEKEKEKKKKEEEVKAIRI) adopt a coiled-coil conformation. The interval 288–434 (IPVVRLKFGE…GMVVLVVRPP (147 aa)) is C-terminal beta sheet.

It belongs to the RAF family. Homodimer.

It is found in the plastid. Its subcellular location is the chloroplast. Its function is as follows. Required for assembly or stability of RuBisCO. Acts at a postchaperonin step to fold and/or assemble the large subunit (rbcL) into RuBisCO. RAF1 brackets an rbcL dimer (rbcL(2)), leading to rbcL(8)-RAF1(4) complex formation. In the next step, RBCS displaces RAF1, thus resulting in holoenzyme formation. The chain is Rubisco accumulation factor 1.2, chloroplastic from Arabidopsis thaliana (Mouse-ear cress).